The sequence spans 175 residues: ATP-dependent protease subunit HslV (175 aa).

Thr2 is an active-site residue. Residues Ala156, Cys159, and Thr162 each coordinate Na(+).

This sequence belongs to the peptidase T1B family. HslV subfamily. In terms of assembly, a double ring-shaped homohexamer of HslV is capped on each side by a ring-shaped HslU homohexamer. The assembly of the HslU/HslV complex is dependent on binding of ATP.

The protein localises to the cytoplasm. It carries out the reaction ATP-dependent cleavage of peptide bonds with broad specificity.. Allosterically activated by HslU binding. Its function is as follows. Protease subunit of a proteasome-like degradation complex believed to be a general protein degrading machinery. The protein is ATP-dependent protease subunit HslV of Rhizobium johnstonii (strain DSM 114642 / LMG 32736 / 3841) (Rhizobium leguminosarum bv. viciae).